The chain runs to 416 residues: Catalase-peroxidase 2 (416 aa).

A signal peptide spans methionine 1–serine 20.

It belongs to the peroxidase family. Peroxidase/catalase subfamily. In terms of assembly, homodimer or homotetramer. It depends on heme b as a cofactor. Formation of the three residue Trp-Tyr-Met cross-link is important for the catalase, but not the peroxidase activity of the enzyme.

It catalyses the reaction H2O2 + AH2 = A + 2 H2O. It carries out the reaction 2 H2O2 = O2 + 2 H2O. Functionally, bifunctional enzyme with both catalase and broad-spectrum peroxidase activity. The polypeptide is Catalase-peroxidase 2 (katG2) (Alkaliphilus metalliredigens (strain QYMF)).